The following is a 63-amino-acid chain: Large ribosomal subunit protein bL28 (63 aa).

It belongs to the bacterial ribosomal protein bL28 family.

The protein is Large ribosomal subunit protein bL28 of Clostridium novyi (strain NT).